The primary structure comprises 350 residues: sn-1 oleoyl-lipid 12-desaturase (350 aa).

The next 2 membrane-spanning stretches (helical) occupy residues 41 to 61 (AWTQALLSVVMVGLGYWSLAI) and 64 to 84 (WFLLPIAWIFTGTALTGFFVI). Residues 86–90 (HDCGH) carry the Histidine box-1 motif. A helical transmembrane segment spans residues 98–118 (WVNDLVGHIFMMPLIYPFHSW). A Histidine box-2 motif is present at residues 122–126 (HNHHH). 2 consecutive transmembrane segments (helical) span residues 196-216 (VAVVVLFAAVAFPTLIATTGI) and 219-239 (FVKFWFVPWLGYHFWMSTFTI). The Histidine box-3 motif lies at 287–291 (HHLST).

It belongs to the fatty acid desaturase type 2 family. Requires Fe(2+) as cofactor.

The protein resides in the membrane. It catalyses the reaction a 1-[(9Z)-octadecenoyl]-2-acyl-glycerolipid + 2 reduced [2Fe-2S]-[ferredoxin] + O2 + 2 H(+) = a 1-[(9Z,12Z)-octadecdienoyl]-2-acyl-glycerolipid + 2 oxidized [2Fe-2S]-[ferredoxin] + 2 H2O. It participates in lipid metabolism; polyunsaturated fatty acid biosynthesis. Functionally, desaturase involved in fatty acid biosynthesis. Introduces a double bond at carbon 12 of oleoyl groups (18:1) attached to the sn-1 position of the glycerol moiety of membrane glycerolipids. This is sn-1 oleoyl-lipid 12-desaturase from Anabaena variabilis.